A 175-amino-acid polypeptide reads, in one-letter code: Transcription factor E (175 aa).

Residues 3-88 (ENPLIQQVLF…TWKPSLEKVP (86 aa)) form the HTH TFE/IIEalpha-type domain.

The protein belongs to the TFE family. As to quaternary structure, monomer. Interaction with RNA polymerase subunits RpoF and RpoE is necessary for Tfe stimulatory transcription activity. Able to interact with Tbp and RNA polymerase in the absence of DNA promoter. Interacts both with the preinitiation and elongation complexes.

In terms of biological role, transcription factor that plays a role in the activation of archaeal genes transcribed by RNA polymerase. Facilitates transcription initiation by enhancing TATA-box recognition by TATA-box-binding protein (Tbp), and transcription factor B (Tfb) and RNA polymerase recruitment. Not absolutely required for transcription in vitro, but particularly important in cases where Tbp or Tfb function is not optimal. It dynamically alters the nucleic acid-binding properties of RNA polymerases by stabilizing the initiation complex and destabilizing elongation complexes. Seems to translocate with the RNA polymerase following initiation and acts by binding to the non template strand of the transcription bubble in elongation complexes. The protein is Transcription factor E of Methanococcus maripaludis (strain C7 / ATCC BAA-1331).